Consider the following 512-residue polypeptide: Kynurenine 3-monooxygenase (512 aa).

The protein belongs to the aromatic-ring hydroxylase family. KMO subfamily. FAD serves as cofactor.

The protein resides in the mitochondrion outer membrane. It catalyses the reaction L-kynurenine + NADPH + O2 + H(+) = 3-hydroxy-L-kynurenine + NADP(+) + H2O. Its pathway is cofactor biosynthesis; NAD(+) biosynthesis; quinolinate from L-kynurenine: step 1/3. Catalyzes the hydroxylation of L-kynurenine (L-Kyn) to form 3-hydroxy-L-kynurenine (L-3OHKyn). Required for synthesis of quinolinic acid. The chain is Kynurenine 3-monooxygenase (bna4) from Aspergillus clavatus (strain ATCC 1007 / CBS 513.65 / DSM 816 / NCTC 3887 / NRRL 1 / QM 1276 / 107).